A 194-amino-acid chain; its full sequence is NAD(P)H:quinone oxidoreductase (194 aa).

This sequence belongs to the SsuE family. Homotetramer. FMN serves as cofactor.

It carries out the reaction a quinone + NADH + H(+) = a quinol + NAD(+). The catalysed reaction is a quinone + NADPH + H(+) = a quinol + NADP(+). The enzyme apparently serves as a quinone reductase in connection with conjugation reactions of hydroquinones involved in detoxification pathways. This Solanum tuberosum (Potato) protein is NAD(P)H:quinone oxidoreductase.